A 106-amino-acid chain; its full sequence is Cytochrome c oxidase assembly protein COX16 homolog, mitochondrial (106 aa).

At 1 to 15 (MIAPAVLRALRKNKT) the chain is on the mitochondrial matrix side. Residues 16-33 (LRYGVPMLLLVVGGSFGL) form a helical membrane-spanning segment. At 34–106 (REFSQIRYDA…NPETLKPKTT (73 aa)) the chain is on the mitochondrial intermembrane side. The segment at 81–106 (IRGPRPWEDPQLLQGRNPETLKPKTT) is disordered.

It belongs to the COX16 family. Associates with the MITRAC complex. Interacts with MT-CO2/COX; specifically interacts with newly synthesized MT-CO2/COX. Interacts with SCO1, SCO2 and COA6.

The protein localises to the mitochondrion inner membrane. Functionally, required for the assembly of the mitochondrial respiratory chain complex IV (CIV), also known as cytochrome c oxidase. Promotes the insertion of copper into the active site of cytochrome c oxidase subunit II (MT-CO2/COX2). Interacts specifically with newly synthesized MT-CO2/COX and its copper center-forming metallochaperones SCO1, SCO2 and COA6. Probably facilitates MT-CO2/COX2 association with the MITRAC assembly intermediate containing MT-CO1/COX1, thereby participating in merging the MT-CO1/COX1 and MT-CO2/COX2 assembly lines. This Mus musculus (Mouse) protein is Cytochrome c oxidase assembly protein COX16 homolog, mitochondrial.